A 301-amino-acid polypeptide reads, in one-letter code: Acetylglutamate kinase (301 aa).

Residues 68–69, Arg-90, and Asn-195 contribute to the substrate site; that span reads GG.

The protein belongs to the acetylglutamate kinase family. ArgB subfamily.

It is found in the cytoplasm. It catalyses the reaction N-acetyl-L-glutamate + ATP = N-acetyl-L-glutamyl 5-phosphate + ADP. The protein operates within amino-acid biosynthesis; L-arginine biosynthesis; N(2)-acetyl-L-ornithine from L-glutamate: step 2/4. In terms of biological role, catalyzes the ATP-dependent phosphorylation of N-acetyl-L-glutamate. This is Acetylglutamate kinase from Pseudomonas putida (strain GB-1).